Here is a 250-residue protein sequence, read N- to C-terminus: MVTGRSAQLCLALLFMSLDVILTATEKSVLTLDPPWIRIFTGEKVTLSCYGNNHLQMNSTTKWIHNGTVSEVNSSHLVIVSATVQDSGKYICQKQGLFKSKPVYLNVTQDWLLLQTSADMVLVHGSFDIRCHGWKNWNVRKVIYYRNDHAFNYSYESPVSIREATLNDSGTYHCKGYLRQVKYESDKFRIAVVKAYKCKYYWLQLIFPLLVAILFAVDTGLLLSTEEQFKSVLEIQKTGKYKKVETELLT.

The signal sequence occupies residues 1-23; the sequence is MVTGRSAQLCLALLFMSLDVILT. At 24 to 204 the chain is on the extracellular side; it reads ATEKSVLTLD…AYKCKYYWLQ (181 aa). An Ig-like 1 domain is found at 28 to 104; that stretch reads SVLTLDPPWI…QGLFKSKPVY (77 aa). Cysteine 49 and cysteine 92 are joined by a disulfide. Asparagine 58, asparagine 66, asparagine 73, asparagine 106, asparagine 152, and asparagine 167 each carry an N-linked (GlcNAc...) asparagine glycan. The region spanning 114–181 is the Ig-like 2 domain; that stretch reads LQTSADMVLV…YHCKGYLRQV (68 aa). Cysteine 131 and cysteine 174 are oxidised to a cystine. The helical transmembrane segment at 205–223 threads the bilayer; the sequence is LIFPLLVAILFAVDTGLLL. At 224–250 the chain is on the cytoplasmic side; sequence STEEQFKSVLEIQKTGKYKKVETELLT.

Tetramer of an alpha chain, a beta chain, and two disulfide linked gamma chains. Interacts with IGHE (via CH3 region). In terms of tissue distribution, expressed in bone marrow mast cells, as well as in the pineal gland at night.

Its subcellular location is the cell membrane. High-affinity receptor for immunoglobulin epsilon/IgE. Mediates IgE effector functions in myeloid cells. Upon IgE binding and antigen/allergen cross-linking initiates signaling pathways that lead to myeloid cell activation and differentiation. On mast cells, basophils and eosinophils stimulates the secretion of vasoactive amines, lipid mediators and cytokines that contribute to inflammatory response, tissue remodeling and cytotoxicity against microbes. Triggers the immediate hypersensitivity response to allergens as a host defense mechanism against helminth parasites, pathogenic bacteria and venom toxicity. When dysregulated, it can elicit harmful life-threatening allergic and anaphylactic reactions. The chain is High affinity immunoglobulin epsilon receptor subunit alpha (Fcer1a) from Mus musculus (Mouse).